A 538-amino-acid polypeptide reads, in one-letter code: Putative outer membrane porin BglH (538 aa).

A signal peptide spans 1–25 (MFRQNLITSAILLMAPLAFSAQSLA). The disordered stretch occupies residues 52-82 (KDEEKKKYTPATVNRSVSTNDQGYAANPFPT). A compositionally biased stretch (polar residues) spans 62–73 (ATVNRSVSTNDQ).

Belongs to the porin LamB (TC 1.B.3) family.

The protein localises to the cell outer membrane. Its function is as follows. May be a sugar porin with a broad carbohydrate specificity. The sequence is that of Putative outer membrane porin BglH (bglH) from Shigella flexneri.